A 177-amino-acid chain; its full sequence is R-phycoerythrin beta chain (177 aa).

Positions 50 and 61 each coordinate phycourobilin. Asn72 carries the post-translational modification N4-methylasparagine. 2 residues coordinate (2R,3E)-phycoerythrobilin: Cys82 and Cys158.

Belongs to the phycobiliprotein family. In terms of assembly, heterodimer of an alpha and a beta chain. Contains two covalently linked phycoerythrobilin chromophores and one covalently linked phycourobilin chromophore.

It localises to the plastid. The protein localises to the chloroplast thylakoid membrane. Functionally, light-harvesting photosynthetic bile pigment-protein from the phycobiliprotein complex. The sequence is that of R-phycoerythrin beta chain (cpeB) from Pyropia yezoensis (Susabi-nori).